Reading from the N-terminus, the 539-residue chain is MPTALPAWQSLTQHAESIRATHMRDWFAAPDAEERVRAFTLEAAGLTVDYSKNRITPDTLSQLLQLAEEAGVLTLRDAMLRGERINNTEHRAVLHVALRGRAEHDYRADGEPVMPEVLRVRAQMRDFANRVHSGAWTGHSGRRITDVVNIGIGGSDLGPRMVCRALDHLAVPQVRVHFVSNVDGTDLAETLDHLNPDTTLAIVCSKTFTTLETMANAHSMRRWFVDHGVAESQLKHHFVAVSTNREAVVQFGIDPDNMFTFWDWVGGRFSLWSAVGLSIVLAIGPQQFEAMLDGARAMDRHFATAAPRENLPLILGMLSVWYRGFFDAASACTVPYCAPLELLTDFMQQLEMESNGKSVQRNGAAIDTDTGPIVWGTAGTNGQHAYFQLIHQGSQIVPVDFITTLEPVRNLPGHHAKLLANCFAQGEALLLGRTAEEVRAGGVTDEALVPHMVFEGNRPSTTILMERLDAASLGALIACAEHRTFVQGAVWNINSFDQWGVELGKKLAKPIQAELEGAPASVAHDASTVALIRRAKAAL.

Glu353 acts as the Proton donor in catalysis. Active-site residues include His384 and Lys505.

Belongs to the GPI family.

The protein resides in the cytoplasm. It catalyses the reaction alpha-D-glucose 6-phosphate = beta-D-fructose 6-phosphate. Its pathway is carbohydrate biosynthesis; gluconeogenesis. It functions in the pathway carbohydrate degradation; glycolysis; D-glyceraldehyde 3-phosphate and glycerone phosphate from D-glucose: step 2/4. In terms of biological role, catalyzes the reversible isomerization of glucose-6-phosphate to fructose-6-phosphate. In Ralstonia pickettii (strain 12J), this protein is Glucose-6-phosphate isomerase.